The following is a 128-amino-acid chain: Fluoride-specific ion channel FluC 1 (128 aa).

A run of 4 helical transmembrane segments spans residues 10–30 (VAFF…AFSF), 32–52 (GTVI…YFFL), 59–79 (AWLT…FSSF), and 93–113 (FGAL…AWAG). Positions 71 and 74 each coordinate Na(+).

The protein belongs to the fluoride channel Fluc/FEX (TC 1.A.43) family.

The protein localises to the cell membrane. The catalysed reaction is fluoride(in) = fluoride(out). With respect to regulation, na(+) is not transported, but it plays an essential structural role and its presence is essential for fluoride channel function. Its function is as follows. Fluoride-specific ion channel. Important for reducing fluoride concentration in the cell, thus reducing its toxicity. The sequence is that of Fluoride-specific ion channel FluC 1 from Lactobacillus delbrueckii subsp. bulgaricus (strain ATCC 11842 / DSM 20081 / BCRC 10696 / JCM 1002 / NBRC 13953 / NCIMB 11778 / NCTC 12712 / WDCM 00102 / Lb 14).